Consider the following 159-residue polypeptide: MEFNLVTIGFTIVNFIILMLILKHFFFDKVNKVIDDRNNEVALTIKKADAQNEEARLLKVESEKNLEDSKLQGKTIVENYKVKAEKVSEEITAEAKTEAQNILERAKRETQREKEKAEDEIKNQVVELAVLISSKALENSINEAEHRKLIEDFVSKVGI.

Residues E2–L22 form a helical membrane-spanning segment.

This sequence belongs to the ATPase B chain family. In terms of assembly, F-type ATPases have 2 components, F(1) - the catalytic core - and F(0) - the membrane proton channel. F(1) has five subunits: alpha(3), beta(3), gamma(1), delta(1), epsilon(1). F(0) has three main subunits: a(1), b(2) and c(10-14). The alpha and beta chains form an alternating ring which encloses part of the gamma chain. F(1) is attached to F(0) by a central stalk formed by the gamma and epsilon chains, while a peripheral stalk is formed by the delta and b chains.

It is found in the cell membrane. In terms of biological role, f(1)F(0) ATP synthase produces ATP from ADP in the presence of a proton or sodium gradient. F-type ATPases consist of two structural domains, F(1) containing the extramembraneous catalytic core and F(0) containing the membrane proton channel, linked together by a central stalk and a peripheral stalk. During catalysis, ATP synthesis in the catalytic domain of F(1) is coupled via a rotary mechanism of the central stalk subunits to proton translocation. Functionally, component of the F(0) channel, it forms part of the peripheral stalk, linking F(1) to F(0). The protein is ATP synthase subunit b of Clostridium acetobutylicum (strain ATCC 824 / DSM 792 / JCM 1419 / IAM 19013 / LMG 5710 / NBRC 13948 / NRRL B-527 / VKM B-1787 / 2291 / W).